A 965-amino-acid chain; its full sequence is Glycine dehydrogenase (decarboxylating) 1 (965 aa).

N6-(pyridoxal phosphate)lysine is present on K713.

It belongs to the GcvP family. In terms of assembly, the glycine cleavage system is composed of four proteins: P, T, L and H. Requires pyridoxal 5'-phosphate as cofactor.

The enzyme catalyses N(6)-[(R)-lipoyl]-L-lysyl-[glycine-cleavage complex H protein] + glycine + H(+) = N(6)-[(R)-S(8)-aminomethyldihydrolipoyl]-L-lysyl-[glycine-cleavage complex H protein] + CO2. The glycine cleavage system catalyzes the degradation of glycine. The P protein binds the alpha-amino group of glycine through its pyridoxal phosphate cofactor; CO(2) is released and the remaining methylamine moiety is then transferred to the lipoamide cofactor of the H protein. The sequence is that of Glycine dehydrogenase (decarboxylating) 1 from Colwellia psychrerythraea (strain 34H / ATCC BAA-681) (Vibrio psychroerythus).